The sequence spans 188 residues: Phosphatidylinositol N-acetylglucosaminyltransferase subunit H (188 aa).

It belongs to the PIGH family. In terms of assembly, component of the glycosylphosphatidylinositol-N-acetylglucosaminyltransferase (GPI-GnT) complex composed at least by PIGA, PIGC, PIGH, PIGP, PIGQ, PIGY and DPM2. Interacts with PIGQ.

The protein resides in the cytoplasm. Its pathway is glycolipid biosynthesis; glycosylphosphatidylinositol-anchor biosynthesis. Part of the glycosylphosphatidylinositol-N-acetylglucosaminyltransferase (GPI-GnT) complex that catalyzes the transfer of N-acetylglucosamine from UDP-N-acetylglucosamine to phosphatidylinositol and participates in the first step of GPI biosynthesis. This is Phosphatidylinositol N-acetylglucosaminyltransferase subunit H from Bos taurus (Bovine).